The primary structure comprises 144 residues: Austinoid biosynthesis clusters protein S (144 aa).

Belongs to the trt14 isomerase family. Homodimer.

It functions in the pathway secondary metabolite biosynthesis; terpenoid biosynthesis. Its function is as follows. Part of the gene cluster B that mediates the biosynthesis of the fungal meroterpenoid acetoxydehydroaustin. The first step of the pathway is the synthesis of 3,5-dimethylorsellinic acid by the polyketide synthase ausA. 3,5-dimethylorsellinic acid is then prenylated by the polyprenyl transferase ausN. Further epoxidation by the FAD-dependent monooxygenase ausM and cyclization by the probable terpene cyclase ausL lead to the formation of protoaustinoid A. Protoaustinoid A is then oxidized to spiro-lactone preaustinoid A3 by the combined action of the FAD-binding monooxygenases ausB and ausC, and the dioxygenase ausE. Acid-catalyzed keto-rearrangement and ring contraction of the tetraketide portion of preaustinoid A3 by ausJ lead to the formation of preaustinoid A4. The aldo-keto reductase ausK, with the help of ausH, is involved in the next step by transforming preaustinoid A4 into isoaustinone which is in turn hydroxylated by the P450 monooxygenase ausI to form austinolide. The cytochrome P450 monooxygenase ausG then modifies austinolide to austinol. Austinol is further acetylated to austin by the O-acetyltransferase ausP, which spontaneously changes to dehydroaustin. The cytochrome P450 monooxygenase then converts dehydroaustin is into 7-dehydrodehydroaustin. The hydroxylation catalyzed by ausR permits the second O-acetyltransferase ausQ to add an additional acetyl group to the molecule, leading to the formation of acetoxydehydroaustin. Due to genetic rearrangements of the clusters and the subsequent loss of some enzymes, the end product of the Penicillium brasilianum austinoid biosynthesis clusters is acetoxydehydroaustin. AusS is necessary for austinoids production and may play a possible function as a regulator. The sequence is that of Austinoid biosynthesis clusters protein S from Penicillium brasilianum.